We begin with the raw amino-acid sequence, 856 residues long: MAP kinase phosphatase with leucine-rich repeats protein 3 (856 aa).

A compositionally biased stretch (low complexity) spans 1–10 (MGNSHSSENG). 3 disordered regions span residues 1-24 (MGNS…GGGS), 84-195 (VKKN…SSVL), and 214-326 (DDNS…NAKD). Gly-2 is lipidated: N-myristoyl glycine. Residues 11 to 24 (GNSGSGGGSGGGGS) show a composition bias toward gly residues. Residues 90–142 (NSSNNNSNNNSNNNNNNNTLNNSTIITTTTTTTTTSTPTTTIMITPPQQQQQQ) are compositionally biased toward low complexity. Positions 155–165 (ESSTPNEQQIR) are enriched in polar residues. 2 stretches are compositionally biased toward low complexity: residues 178–195 (ESSF…SSVL) and 224–243 (QQQQ…QQTQ). Composition is skewed to polar residues over residues 254–265 (IVNNKSSSTTNI) and 272–281 (AQTSRSTSIP). The span at 306–323 (NSLSSSNIITPNNTTNTN) shows a compositional bias: low complexity. LRR repeat units follow at residues 344–365 (KIFS…ILSI), 370–391 (EIQE…QLVK), 392–413 (SLTT…VFIE), 416–437 (SLTS…IDQI), 439–461 (NLKY…SNLS), 462–484 (QLIS…DDLI), 485–506 (NLRM…RKLV), and 507–528 (NLVT…FAYL). The interval 554–577 (NINSNNNDSNNSNNNNNNNNDNNN) is disordered. In terms of domain architecture, Tyrosine-protein phosphatase spans 632 to 773 (IPSEIIPGIF…LLKYEAKLFC (142 aa)). Cys-717 acts as the Phosphocysteine intermediate in catalysis. Residues 810-856 (INNSSNSNNNNSTDNSNNSSTSTTPNLSSLSSDSSSSASLSKLSISK) are disordered.

It belongs to the protein-tyrosine phosphatase family. Non-receptor class dual specificity subfamily.

It carries out the reaction O-phospho-L-tyrosyl-[protein] + H2O = L-tyrosyl-[protein] + phosphate. The enzyme catalyses O-phospho-L-seryl-[protein] + H2O = L-seryl-[protein] + phosphate. It catalyses the reaction O-phospho-L-threonyl-[protein] + H2O = L-threonyl-[protein] + phosphate. In terms of biological role, probable phosphatase with dual specificity toward Ser/Thr and Tyr-containing proteins. This Dictyostelium discoideum (Social amoeba) protein is MAP kinase phosphatase with leucine-rich repeats protein 3 (mpl3).